A 190-amino-acid polypeptide reads, in one-letter code: Recombination protein RecR (190 aa).

The C4-type zinc-finger motif lies at 58–73 (CTQCGGLSEDELCYIC). Positions 81 to 167 (SSLCLVESAR…HFTKIAQGVP (87 aa)) constitute a Toprim domain.

It belongs to the RecR family.

Functionally, may play a role in DNA repair. It seems to be involved in an RecBC-independent recombinational process of DNA repair. It may act with RecF and RecO. The sequence is that of Recombination protein RecR from Nitratiruptor sp. (strain SB155-2).